Reading from the N-terminus, the 229-residue chain is Capsid protein (229 aa).

N-acetylmethionine; by host is present on methionine 1. The segment covering 1-10 has biased composition (gly residues); that stretch reads MAQNGTGGGS. The interval 1–28 is disordered; that stretch reads MAQNGTGGGSRRPRRGRRNNNNNNSTAR. Cysteine 64 and cysteine 106 are disulfide-bonded.

The protein belongs to the cucumovirus capsid protein family.

It localises to the virion. In terms of biological role, capsid protein. Probably binds RNA and plays a role in packaging. The polypeptide is Capsid protein (Canna (Florist's daisy)).